We begin with the raw amino-acid sequence, 329 residues long: Ankyrin repeat and SOCS box protein 5 (329 aa).

ANK repeat units lie at residues 69–98, 102–131, 135–164, 167–196, 200–229, and 232–261; these read ADRSPLHEAASQGRLLALRTLLSQGYNVNA, DHVTPLHEACLGDHVACARTLLEAGANANA, DGVTPLFNACSQGSASCAELLLEYGAKAQL, CFPSPTHEAASKGHHECLDILIAWGIDVDQ, HLGTPLYVACMSQQFHCIWKLLYAGADVHK, and YWDTPLHAAAQQPSTEIVNLLLEFGADINA. The SOCS box domain maps to 278-329; it reads AVERILLQHEATPSSLCQLCRLCIRNYIGRQRFHLIPQLQLPTLLQNFLQYR.

Belongs to the ankyrin SOCS box (ASB) family.

It functions in the pathway protein modification; protein ubiquitination. May be a substrate-recognition component of a SCF-like ECS (Elongin-Cullin-SOCS-box protein) E3 ubiquitin-protein ligase complex which mediates the ubiquitination and subsequent proteasomal degradation of target proteins. May play a role in the initiation of arteriogenesis. The polypeptide is Ankyrin repeat and SOCS box protein 5 (Asb5) (Mus musculus (Mouse)).